Here is a 310-residue protein sequence, read N- to C-terminus: Porphobilinogen deaminase (310 aa).

C243 is subject to S-(dipyrrolylmethanemethyl)cysteine.

This sequence belongs to the HMBS family. Monomer. Dipyrromethane is required as a cofactor.

The enzyme catalyses 4 porphobilinogen + H2O = hydroxymethylbilane + 4 NH4(+). Its pathway is porphyrin-containing compound metabolism; protoporphyrin-IX biosynthesis; coproporphyrinogen-III from 5-aminolevulinate: step 2/4. Functionally, tetrapolymerization of the monopyrrole PBG into the hydroxymethylbilane pre-uroporphyrinogen in several discrete steps. In Methylobacillus flagellatus (strain ATCC 51484 / DSM 6875 / VKM B-1610 / KT), this protein is Porphobilinogen deaminase.